Here is a 736-residue protein sequence, read N- to C-terminus: 3',5'-cyclic-AMP phosphodiesterase 4B (736 aa).

3 disordered regions span residues 51 to 78 (QLPP…TTLP), 189 to 209 (LHGT…SRVN), and 282 to 301 (KQND…KKKK). Ser-290 bears the Phosphoserine mark. The region spanning 330-659 (VNTENEDHLA…NWYQSMIPQS (330 aa)) is the PDEase domain. Residue His-406 is the Proton donor of the active site. His-406 is a 3',5'-cyclic AMP binding site. His-406 and His-410 together coordinate AMP. Zn(2+) is bound by residues His-410, His-446, Asp-447, and Asp-564. Residues Asp-447, Asp-564, Gln-615, and Phe-618 each coordinate AMP. Asp-447 contributes to the Mg(2+) binding site. Position 447 (Asp-447) interacts with Mn(2+). 3',5'-cyclic AMP-binding residues include Gln-615 and Phe-618. 2 positions are modified to phosphoserine: Ser-659 and Ser-661. Residues 685 to 736 (DEEDSEGPEKEGEGHSYFSSTKTLCVIDPENRDSLGETDIDIATEDKSPVDT) form a disordered region.

This sequence belongs to the cyclic nucleotide phosphodiesterase family. PDE4 subfamily. Interacts with DISC1. It depends on Zn(2+) as a cofactor. Mg(2+) serves as cofactor. Requires Mn(2+) as cofactor. Expressed in brain, heart, lung and skeletal muscle. Expressed in white blood cells. As to expression, brain-specific isoform.

Its subcellular location is the cytoplasm. It is found in the cell membrane. It catalyses the reaction 3',5'-cyclic AMP + H2O = AMP + H(+). It participates in purine metabolism; 3',5'-cyclic AMP degradation; AMP from 3',5'-cyclic AMP: step 1/1. Its activity is regulated as follows. Inhibited by rolipram. In terms of biological role, hydrolyzes the second messenger cAMP, which is a key regulator of many important physiological processes. May be involved in mediating central nervous system effects of therapeutic agents ranging from antidepressants to antiasthmatic and anti-inflammatory agents. The protein is 3',5'-cyclic-AMP phosphodiesterase 4B of Homo sapiens (Human).